The sequence spans 196 residues: Probable phosphoheptose isomerase (196 aa).

Residues 43–196 (IVNVFNSGGK…MICSVIDSYY (154 aa)) form the SIS domain. 58–60 (NGG) lines the substrate pocket. Zn(2+) is bound by residues H67 and E71. Substrate contacts are provided by residues E71, 100-101 (ND), 126-128 (STS), S131, and Q178. 2 residues coordinate Zn(2+): Q178 and H186.

It belongs to the SIS family. GmhA subfamily. Zn(2+) is required as a cofactor.

The protein resides in the cytoplasm. The enzyme catalyses 2 D-sedoheptulose 7-phosphate = D-glycero-alpha-D-manno-heptose 7-phosphate + D-glycero-beta-D-manno-heptose 7-phosphate. It participates in carbohydrate biosynthesis; D-glycero-D-manno-heptose 7-phosphate biosynthesis; D-glycero-alpha-D-manno-heptose 7-phosphate and D-glycero-beta-D-manno-heptose 7-phosphate from sedoheptulose 7-phosphate: step 1/1. Catalyzes the isomerization of sedoheptulose 7-phosphate in D-glycero-D-manno-heptose 7-phosphate. The polypeptide is Probable phosphoheptose isomerase (Thermoplasma volcanium (strain ATCC 51530 / DSM 4299 / JCM 9571 / NBRC 15438 / GSS1)).